The chain runs to 945 residues: Valine--tRNA ligase (945 aa).

The 'HIGH' region signature appears at 42 to 52 (PNVTGTLHMGH). The short motif at 552–556 (KMSKS) is the 'KMSKS' region element. Residue Lys555 participates in ATP binding. The stretch at 879–945 (DKAAETARLS…VQNQLAKLKD (67 aa)) forms a coiled coil.

It belongs to the class-I aminoacyl-tRNA synthetase family. ValS type 1 subfamily. As to quaternary structure, monomer.

The protein resides in the cytoplasm. It catalyses the reaction tRNA(Val) + L-valine + ATP = L-valyl-tRNA(Val) + AMP + diphosphate. Catalyzes the attachment of valine to tRNA(Val). As ValRS can inadvertently accommodate and process structurally similar amino acids such as threonine, to avoid such errors, it has a 'posttransfer' editing activity that hydrolyzes mischarged Thr-tRNA(Val) in a tRNA-dependent manner. This chain is Valine--tRNA ligase, found in Neisseria gonorrhoeae (strain ATCC 700825 / FA 1090).